Reading from the N-terminus, the 659-residue chain is RNA polymerase II-associated protein 3 (659 aa).

Thr-2 is modified (N-acetylthreonine). The TPR 1 repeat unit spans residues 8-41 (VELQLQVKHNAEELQDFMRDLEHWEKTMRQKDLE). The tract at residues 39-81 (DLELRRQSGVPEENLPPIRNGSFRKKKKRKTKDSSKKTKEENT) is disordered. A compositionally biased stretch (basic residues) spans 60–69 (SFRKKKKRKT). A compositionally biased stretch (basic and acidic residues) spans 70–81 (KDSSKKTKEENT). Ser-87, Ser-116, Ser-119, and Ser-121 each carry phosphoserine. Residues 107–128 (KEDSTHDSVSQESESDEDGVRV) are disordered. TPR repeat units follow at residues 133–166 (ALVL…DPYN), 168–200 (VLPT…SRSY), 201–234 (TKAY…EPDN), 282–315 (AIAE…DSTN), 317–349 (LLPA…DGSY), and 350–383 (SKAF…EPGN). The tract at residues 447–485 (DAPESSATVPESDRAAVAVDTGRKKDFSQGDSVSSGETP) is disordered. Ser-474 is modified (phosphoserine). Lys-491 is covalently cross-linked (Glycyl lysine isopeptide (Lys-Gly) (interchain with G-Cter in SUMO2)).

The protein belongs to the RPAP3 family. In terms of assembly, tightly associated with the RNA polymerase II complex. Component of the R2TP complex composed at least of RUVBL1, RUVBL2, RPAP3 and PIHD1. Component of the PAQosome complex which is responsible for the biogenesis of several protein complexes and which consists of R2TP complex members RUVBL1, RUVBL2, RPAP3 and PIH1D1, URI complex members PFDN2, PFDN6, PDRG1, UXT and URI1 as well as ASDURF, POLR2E and DNAAF10/WDR92. Interacts with PIH1D1. Interacts with TSC1 and TSC2. Interacts with PRPF8 and EFTUD2 in a ZNHIT2-dependent manner.

In terms of biological role, forms an interface between the RNA polymerase II enzyme and chaperone/scaffolding protein, suggesting that it is required to connect RNA polymerase II to regulators of protein complex formation. The chain is RNA polymerase II-associated protein 3 (Rpap3) from Rattus norvegicus (Rat).